We begin with the raw amino-acid sequence, 204 residues long: Thiamine-phosphate synthase (204 aa).

Residues 32-36 and aspartate 64 contribute to the 4-amino-2-methyl-5-(diphosphooxymethyl)pyrimidine site; that span reads QLRMK. Residues aspartate 65 and aspartate 84 each contribute to the Mg(2+) site. Threonine 103 lines the 4-amino-2-methyl-5-(diphosphooxymethyl)pyrimidine pocket. Residue 129–131 coordinates 2-[(2R,5Z)-2-carboxy-4-methylthiazol-5(2H)-ylidene]ethyl phosphate; that stretch reads TTT. Lysine 132 is a binding site for 4-amino-2-methyl-5-(diphosphooxymethyl)pyrimidine. Position 165 (glycine 165) interacts with 2-[(2R,5Z)-2-carboxy-4-methylthiazol-5(2H)-ylidene]ethyl phosphate.

The protein belongs to the thiamine-phosphate synthase family. Mg(2+) serves as cofactor.

The catalysed reaction is 2-[(2R,5Z)-2-carboxy-4-methylthiazol-5(2H)-ylidene]ethyl phosphate + 4-amino-2-methyl-5-(diphosphooxymethyl)pyrimidine + 2 H(+) = thiamine phosphate + CO2 + diphosphate. The enzyme catalyses 2-(2-carboxy-4-methylthiazol-5-yl)ethyl phosphate + 4-amino-2-methyl-5-(diphosphooxymethyl)pyrimidine + 2 H(+) = thiamine phosphate + CO2 + diphosphate. It carries out the reaction 4-methyl-5-(2-phosphooxyethyl)-thiazole + 4-amino-2-methyl-5-(diphosphooxymethyl)pyrimidine + H(+) = thiamine phosphate + diphosphate. It functions in the pathway cofactor biosynthesis; thiamine diphosphate biosynthesis; thiamine phosphate from 4-amino-2-methyl-5-diphosphomethylpyrimidine and 4-methyl-5-(2-phosphoethyl)-thiazole: step 1/1. Condenses 4-methyl-5-(beta-hydroxyethyl)thiazole monophosphate (THZ-P) and 2-methyl-4-amino-5-hydroxymethyl pyrimidine pyrophosphate (HMP-PP) to form thiamine monophosphate (TMP). This chain is Thiamine-phosphate synthase, found in Bacteroides fragilis (strain YCH46).